Reading from the N-terminus, the 607-residue chain is Elongation factor 4 (607 aa).

Positions 11–193 (ENIRNFSIIA…KIVEVVPAPD (183 aa)) constitute a tr-type G domain. Residues 23–28 (DHGKST) and 140–143 (NKID) each bind GTP.

It belongs to the TRAFAC class translation factor GTPase superfamily. Classic translation factor GTPase family. LepA subfamily.

It is found in the cell membrane. The enzyme catalyses GTP + H2O = GDP + phosphate + H(+). Functionally, required for accurate and efficient protein synthesis under certain stress conditions. May act as a fidelity factor of the translation reaction, by catalyzing a one-codon backward translocation of tRNAs on improperly translocated ribosomes. Back-translocation proceeds from a post-translocation (POST) complex to a pre-translocation (PRE) complex, thus giving elongation factor G a second chance to translocate the tRNAs correctly. Binds to ribosomes in a GTP-dependent manner. This is Elongation factor 4 from Staphylococcus aureus (strain N315).